Consider the following 240-residue polypeptide: Ribonuclease 3 (240 aa).

An RNase III domain is found at 9–141 (VEEFQKKTGI…LLAAIYLDQG (133 aa)). Glu54 serves as a coordination point for Mg(2+). Asp58 is an active-site residue. Mg(2+) is bound by residues Asp127 and Glu130. Glu130 is an active-site residue. The DRBM domain occupies 168-237 (DYKTALQEIV…ARIAYEKLLK (70 aa)).

It belongs to the ribonuclease III family. As to quaternary structure, homodimer. Mg(2+) is required as a cofactor.

The protein resides in the cytoplasm. The catalysed reaction is Endonucleolytic cleavage to 5'-phosphomonoester.. In terms of biological role, digests double-stranded RNA. Involved in the processing of primary rRNA transcript to yield the immediate precursors to the large and small rRNAs (23S and 16S). Processes some mRNAs, and tRNAs when they are encoded in the rRNA operon. Processes pre-crRNA and tracrRNA of type II CRISPR loci if present in the organism. The chain is Ribonuclease 3 from Thermotoga sp. (strain RQ2).